The following is a 141-amino-acid chain: uncharacterized protein (141 aa).

The next 5 helical transmembrane spans lie at 7–27 (FWAL…KVGV), 34–54 (FATL…VAAT), 69–89 (LFLA…FRAL), 97–117 (VAPL…LFLG), and 121–141 (NLMN…LAVF). Positions 14–140 (AFAALTAVFA…IAAGALLLAV (127 aa)) constitute an EamA domain.

It belongs to the EamA transporter family.

The protein resides in the cell membrane. This is an uncharacterized protein from Sinorhizobium sp.